The primary structure comprises 322 residues: Epiphycan (322 aa).

The N-terminal stretch at 1 to 19 (MKTLAGLVLGLVIFDAAVT) is a signal peptide. Threonine 60 carries an O-linked (GalNAc...) threonine glycan. The O-linked (Xyl...) (dermatan sulfate) serine glycan is linked to serine 64. The segment at 64–101 (SGNRELLTPPPQPEKAQEEEEEEESTPRLIDGSSPQEP) is disordered. Residue serine 96 is glycosylated (O-linked (GalNAc...) serine). The LRRNT domain maps to 106 to 143 (VLGPHTNEDFPTCLLCTCISTTVYCDDHELDAIPPLPK). An intrachain disulfide couples cysteine 118 to cysteine 130. LRR repeat units follow at residues 144-165 (NTAY…DFAS), 168-189 (DLKR…AFRK), 192-213 (QLRE…PTTL), 238-258 (DLHH…PLPE), and 259-280 (NLRA…TFCN). Cysteine 279 and cysteine 312 are disulfide-bonded. 2 N-linked (GlcNAc...) asparagine glycosylation sites follow: asparagine 283 and asparagine 302. The LRR 6 repeat unit spans residues 290 to 310 (ALEDIRLDGNPINLSKTPQAY).

It belongs to the small leucine-rich proteoglycan (SLRP) family. SLRP class III subfamily. The O-linked polysaccharides on Thr-60 and Ser-96 are probably the mucin type linked to GalNAc. There is one glycosaminoglycan chain, known to be dermatan sulfate, and it is probably the O-glycosylation at Ser-64. Cartilage, ligament, and placenta.

The protein resides in the secreted. It localises to the extracellular space. The protein localises to the extracellular matrix. May have a role in bone formation and also in establishing the ordered structure of cartilage through matrix organization. The chain is Epiphycan (EPYC) from Homo sapiens (Human).